The primary structure comprises 1057 residues: Carbamoyl phosphate synthase large chain (1057 aa).

Positions 1-401 (MPKRDDIQTI…SLLKAIRSLE (401 aa)) are carboxyphosphate synthetic domain. ATP contacts are provided by Arg-129, Arg-169, Gly-175, Gly-176, Lys-208, Ile-210, Glu-215, Gly-241, Ile-242, His-243, Gln-284, and Glu-298. Residues 133–327 (RTLMNDLNVP…IAKLAAKIAV (195 aa)) form the ATP-grasp 1 domain. 3 residues coordinate Mg(2+): Gln-284, Glu-298, and Asn-300. Mn(2+)-binding residues include Gln-284, Glu-298, and Asn-300. An oligomerization domain region spans residues 402 to 546 (YGVHHLGLPN…YGTYEDENES (145 aa)). The carbamoyl phosphate synthetic domain stretch occupies residues 547 to 929 (IVTDKEKILV…ALYKGLTGSG (383 aa)). Positions 671 to 861 (EALLREISVP…MAQLAMRAIM (191 aa)) constitute an ATP-grasp 2 domain. Positions 707, 746, 748, 752, 777, 778, 779, 780, 820, and 832 each coordinate ATP. Residues Gln-820, Glu-832, and Asn-834 each contribute to the Mg(2+) site. Residues Gln-820, Glu-832, and Asn-834 each coordinate Mn(2+). Positions 930–1057 (FEVKDHGTVL…ESMTFTMRNV (128 aa)) constitute an MGS-like domain. Residues 930 to 1057 (FEVKDHGTVL…ESMTFTMRNV (128 aa)) are allosteric domain.

The protein belongs to the CarB family. As to quaternary structure, composed of two chains; the small (or glutamine) chain promotes the hydrolysis of glutamine to ammonia, which is used by the large (or ammonia) chain to synthesize carbamoyl phosphate. Tetramer of heterodimers (alpha,beta)4. Mg(2+) is required as a cofactor. The cofactor is Mn(2+).

It catalyses the reaction hydrogencarbonate + L-glutamine + 2 ATP + H2O = carbamoyl phosphate + L-glutamate + 2 ADP + phosphate + 2 H(+). The catalysed reaction is hydrogencarbonate + NH4(+) + 2 ATP = carbamoyl phosphate + 2 ADP + phosphate + 2 H(+). It participates in amino-acid biosynthesis; L-arginine biosynthesis; carbamoyl phosphate from bicarbonate: step 1/1. It functions in the pathway pyrimidine metabolism; UMP biosynthesis via de novo pathway; (S)-dihydroorotate from bicarbonate: step 1/3. Large subunit of the glutamine-dependent carbamoyl phosphate synthetase (CPSase). CPSase catalyzes the formation of carbamoyl phosphate from the ammonia moiety of glutamine, carbonate, and phosphate donated by ATP, constituting the first step of 2 biosynthetic pathways, one leading to arginine and/or urea and the other to pyrimidine nucleotides. The large subunit (synthetase) binds the substrates ammonia (free or transferred from glutamine from the small subunit), hydrogencarbonate and ATP and carries out an ATP-coupled ligase reaction, activating hydrogencarbonate by forming carboxy phosphate which reacts with ammonia to form carbamoyl phosphate. The sequence is that of Carbamoyl phosphate synthase large chain from Staphylococcus epidermidis (strain ATCC 35984 / DSM 28319 / BCRC 17069 / CCUG 31568 / BM 3577 / RP62A).